The following is a 286-amino-acid chain: Pyridoxal kinase PdxY (286 aa).

Substrate-binding positions include Ser9 and 44-45 (MQ). Asp111, Glu147, and Lys180 together coordinate ATP. Substrate is bound at residue Asp221.

Belongs to the pyridoxine kinase family. PdxY subfamily. Homodimer. Mg(2+) serves as cofactor.

It carries out the reaction pyridoxal + ATP = pyridoxal 5'-phosphate + ADP + H(+). The protein operates within cofactor metabolism; pyridoxal 5'-phosphate salvage; pyridoxal 5'-phosphate from pyridoxal: step 1/1. Pyridoxal kinase involved in the salvage pathway of pyridoxal 5'-phosphate (PLP). Catalyzes the phosphorylation of pyridoxal to PLP. The protein is Pyridoxal kinase PdxY of Burkholderia orbicola (strain AU 1054).